The sequence spans 81 residues: U-megalopygitoxin(3)-Mo4 (81 aa).

The signal sequence occupies residues 1 to 20 (MNSKFVLIVVFLAVVSICFA).

Belongs to the caterpillar 3 family. Post-translationally, contains 3 disulfide bonds. As to expression, expressed by the venom apparatus.

The protein resides in the secreted. Probable toxin. This chain is U-megalopygitoxin(3)-Mo4, found in Megalopyge opercularis (Southern flannel moth).